We begin with the raw amino-acid sequence, 324 residues long: Tyrosine--tRNA ligase (324 aa).

Tyrosine 36 is a binding site for L-tyrosine. The 'HIGH' region motif lies at 41-49 (PSGKVHLGH). Tyrosine 158, glutamine 162, aspartate 165, and glutamine 180 together coordinate L-tyrosine. The 'KMSKS' region motif lies at 215 to 219 (KMSSS). Position 218 (serine 218) interacts with ATP.

It belongs to the class-I aminoacyl-tRNA synthetase family. TyrS type 3 subfamily. Homodimer.

It localises to the cytoplasm. It catalyses the reaction tRNA(Tyr) + L-tyrosine + ATP = L-tyrosyl-tRNA(Tyr) + AMP + diphosphate + H(+). Its function is as follows. Catalyzes the attachment of tyrosine to tRNA(Tyr) in a two-step reaction: tyrosine is first activated by ATP to form Tyr-AMP and then transferred to the acceptor end of tRNA(Tyr). This Methanopyrus kandleri (strain AV19 / DSM 6324 / JCM 9639 / NBRC 100938) protein is Tyrosine--tRNA ligase.